Reading from the N-terminus, the 357-residue chain is NAD kinase 1 (357 aa).

Aspartate 68 acts as the Proton acceptor in catalysis. NAD(+) contacts are provided by residues 68–69 (DG), arginine 73, 175–176 (ND), arginine 186, aspartate 205, alanine 240, and glutamine 275.

This sequence belongs to the NAD kinase family. It depends on a divalent metal cation as a cofactor.

The protein localises to the cytoplasm. The catalysed reaction is NAD(+) + ATP = ADP + NADP(+) + H(+). Its function is as follows. Involved in the regulation of the intracellular balance of NAD and NADP, and is a key enzyme in the biosynthesis of NADP. Catalyzes specifically the phosphorylation on 2'-hydroxyl of the adenosine moiety of NAD to yield NADP. This chain is NAD kinase 1, found in Streptomyces avermitilis (strain ATCC 31267 / DSM 46492 / JCM 5070 / NBRC 14893 / NCIMB 12804 / NRRL 8165 / MA-4680).